The sequence spans 790 residues: Choline transporter-like 2 (790 aa).

The helical transmembrane segment at 47–67 (PCLFLFVTFLCAWGYVAYYAV) threads the bilayer. N-linked (GlcNAc...) asparagine glycans are attached at residues asparagine 102 and asparagine 259. Helical transmembrane passes span 288 to 308 (IITP…FQMI), 319 to 339 (ILVF…MLRW), and 344 to 364 (LVWI…YYSF). Asparagine 384 carries an N-linked (GlcNAc...) asparagine glycan. 2 consecutive transmembrane segments (helical) span residues 400 to 420 (LWIL…VLVL) and 449 to 469 (LVPW…LLFL). N-linked (GlcNAc...) asparagine glycosylation occurs at asparagine 483. 4 helical membrane passes run 545 to 565 (VIGF…VLAF), 592 to 612 (VYYH…CKII), 691 to 711 (VTGF…AAVT), and 728 to 748 (FVPA…FFSV).

This sequence belongs to the CTL (choline transporter-like) family.

The protein resides in the membrane. The polypeptide is Choline transporter-like 2 (Anopheles gambiae (African malaria mosquito)).